We begin with the raw amino-acid sequence, 253 residues long: Transmembrane protein 51 (253 aa).

Helical transmembrane passes span 17–37 and 65–85; these read IGLG…VPGF and VAYV…CLSI. 2 disordered regions span residues 93 to 133 and 164 to 253; these read QGED…YVPS and LTGL…RPPD. Residues 113–124 show a composition bias toward acidic residues; sequence EDSQEEEEEDEE. The residue at position 115 (serine 115) is a Phosphoserine. Residues 164–176 are compositionally biased toward polar residues; that stretch reads LTGLDETTPTSTR. Residues serine 182 and serine 192 each carry the phosphoserine modification. Positions 194–205 are enriched in basic residues; sequence LAKRLKPLKVRR. A compositionally biased stretch (basic and acidic residues) spans 206-217; that stretch reads IKSEKLHLKDFR. The segment covering 224 to 238 has biased composition (pro residues); that stretch reads NVPPPSIEPLTPPPQ. Residues 242–253 show a composition bias toward basic and acidic residues; that stretch reads VQEKAPDTRPPD.

The protein resides in the membrane. In Homo sapiens (Human), this protein is Transmembrane protein 51 (TMEM51).